Here is a 119-residue protein sequence, read N- to C-terminus: Large ribosomal subunit protein bL20c (119 aa).

It belongs to the bacterial ribosomal protein bL20 family.

The protein resides in the plastid. The protein localises to the chloroplast. Its function is as follows. Binds directly to 23S ribosomal RNA and is necessary for the in vitro assembly process of the 50S ribosomal subunit. It is not involved in the protein synthesizing functions of that subunit. This is Large ribosomal subunit protein bL20c from Oedogonium cardiacum (Filamentous green alga).